Here is an 87-residue protein sequence, read N- to C-terminus: Virulence protein PagD (87 aa).

The signal sequence occupies residues 1-20 (MKHHAFMLWSLLIFSFHVLA). The disordered stretch occupies residues 46-87 (QPPTNTDKKQARQISSPSCPTTKPMMSAPVNDARKGNTFSRT). A compositionally biased stretch (polar residues) spans 57–66 (RQISSPSCPT).

In terms of biological role, putative function in virulence. Could be involved in promoting S.typhimurium survival within macrophages. The chain is Virulence protein PagD (pagD) from Salmonella typhimurium (strain LT2 / SGSC1412 / ATCC 700720).